Consider the following 405-residue polypeptide: MSDVTVANYHAFPDARGHFGRYGGRFVAETLIGPLQELAQAYDAARHDPDFIAAYNKDLKDYVGRPSPIYHAERLSRKVGGAQILLKREDLNHTGAHKINNTIGQALLAARMGKTRIIAETGAGQHGVASATVAARLGLECVVYMGATDIERQQINVYRMKLLGATVVPVTSGSATLKDALNEAMRDWVTHVGHTFYIIGTVAGPDPYPRMVRDFNAIVGREARAQMIEDYGRLPDAMTACVGGGSNAIGLFHAFLNDASVRIYGAEAAGDGIATGRHAASIVAGRPGVLHGNRTYVVCDDDGQILETHSVSAGLDYPGVGPEHAFLADSGRVQYVGIRDEEALAAFHLLAHTEGILAALESSHAVAHAMTLARDLPKDALVLCNLSGRGDKDVHTIAAREGVRV.

N6-(pyridoxal phosphate)lysine is present on K98.

It belongs to the TrpB family. As to quaternary structure, tetramer of two alpha and two beta chains. It depends on pyridoxal 5'-phosphate as a cofactor.

The catalysed reaction is (1S,2R)-1-C-(indol-3-yl)glycerol 3-phosphate + L-serine = D-glyceraldehyde 3-phosphate + L-tryptophan + H2O. It functions in the pathway amino-acid biosynthesis; L-tryptophan biosynthesis; L-tryptophan from chorismate: step 5/5. In terms of biological role, the beta subunit is responsible for the synthesis of L-tryptophan from indole and L-serine. This chain is Tryptophan synthase beta chain (trpB), found in Xylella fastidiosa (strain 9a5c).